Here is a 244-residue protein sequence, read N- to C-terminus: T-cell immunoreceptor with Ig and ITIM domains (244 aa).

Residues 1 to 21 (MRWCLLLIWAQGLRQAPLASG) form the signal peptide. In terms of domain architecture, Ig-like V-type spans 22–124 (MMTGTIETTG…DGTYTGRIFL (103 aa)). At 22-141 (MMTGTIETTG…AEHGARFQIP (120 aa)) the chain is on the extracellular side. Asparagine 32 and asparagine 101 each carry an N-linked (GlcNAc...) asparagine glycan. The tract at residues 32–42 (NISAEKGGSII) is homodimerization. The cysteines at positions 45 and 108 are disulfide-linked. Residues 142–162 (LLGAMAATLVVICTAVIVVVA) traverse the membrane as a helical segment. The Cytoplasmic segment spans residues 163 to 244 (LTRKKKALRI…GNCSFFTETG (82 aa)). Tyrosine 225 is modified (phosphotyrosine). The ITIM motif motif lies at 229–234 (LSYRSL).

As to quaternary structure, homodimer in cis; binds with high affinity to PVR, forming a heterotetrameric assembly of two TIGIT and two PVR molecules. Binds with lower affinity to NECTIN2 and NECTIN3. Interacts with GRB2. Interacts with NECTIN4. As to expression, expressed at low levels on peripheral memory and regulatory CD4+ T-cells and NK cells and is up-regulated following activation of these cells (at protein level).

It is found in the cell membrane. Inhibitory receptor that plays a role in the modulation of immune responses. Suppresses T-cell activation by promoting the generation of mature immunoregulatory dendritic cells. Upon binding to its ligands PVR/CD155 or NECTIN2/CD112, which are expressed on antigen-presenting cells, sends inhibitory signals to the T-cell or NK cell. Mechanistically, interaction with ligand leads to phosphorylation of the cytoplasmic tail by Src family tyrosine kinases such as FYN or LCK, allowing subsequent binding to adapter GRB2 and SHIP1/INPP5D. In turn, inhibits PI3K and MAPK signaling cascades. In addition, associates with beta-arrestin-2/ARRB2 to recruit SHIP1/INPP5D that suppresses autoubiquitination of TRAF6 and subsequently inhibits NF-kappa-B signaling pathway. Also acts as a receptor for NECTIN4 to inhibit NK cell cytotoxicity. In Homo sapiens (Human), this protein is T-cell immunoreceptor with Ig and ITIM domains (TIGIT).